We begin with the raw amino-acid sequence, 417 residues long: Interferon-gamma-inducible GTPase 10 (417 aa).

Gly2 is lipidated: N-myristoyl glycine. Residues 67–249 (APLNIAVTGE…PSLESTLLEE (183 aa)) enclose the IRG-type G domain. Residues Gly78, Ala79, Ser82, Thr83, Ser101, Lys183, Asp185, and Ser231 each coordinate GDP. Helical transmembrane passes span 284-302 (EALK…FFND) and 370-387 (AVTG…KSYY).

Belongs to the TRAFAC class dynamin-like GTPase superfamily. GB1/RHD3 GTPase family. GB1 subfamily. In terms of assembly, homooligomer; homooligomerization occurs upon GTP-binding and is required for the association with membranous structures. Homodimer; GDP-binding induces formation of an inactive head-to-head homodimer. Post-translationally, myristoylation is required for localization to pathogen-containing vacuoles. (Microbial infection) Phosphorylated by Toxoplasma gondii ROP18.

It is found in the membrane. It localises to the cytoplasmic vesicle membrane. The enzyme catalyses GTP + H2O = GDP + phosphate + H(+). Its function is as follows. Interferon (IFN)-inducible GTPase that plays important roles in innate immunity against a diverse range of bacterial, viral and protozoan pathogens by mediating cytosolic release of pathogenic ligands that activate the inflammasomes. Following infection, recruited to the membrane of pathogens in a GBP-dependent manner and mediates disruption of the pathogen membrane, liberating ligands that are detected by inflammasomes, such as lipopolysaccharide (LPS) that activates the non-canonical CASP4/CASP11 inflammasome or double-stranded DNA (dsDNA) that activates the AIM2 inflammasome. Promotes AIM2 and NLRP3 inflammasome activation following A.fumigatus infection by liberating beta-glucan, which directly triggers inflammasome assembly. Promotes NLRP3 inflammasome activation following influenza A virus infection. In Mus musculus (Mouse), this protein is Interferon-gamma-inducible GTPase 10.